The chain runs to 119 residues: Large ribosomal subunit protein bL20 (119 aa).

The protein belongs to the bacterial ribosomal protein bL20 family.

In terms of biological role, binds directly to 23S ribosomal RNA and is necessary for the in vitro assembly process of the 50S ribosomal subunit. It is not involved in the protein synthesizing functions of that subunit. The polypeptide is Large ribosomal subunit protein bL20 (Shewanella amazonensis (strain ATCC BAA-1098 / SB2B)).